The chain runs to 267 residues: Dihydropteroate synthase (267 aa).

In terms of domain architecture, Pterin-binding spans 1-251; sequence MTKTKIIGIL…NVDLNVKLAQ (251 aa). N11 is a Mg(2+) binding site. (7,8-dihydropterin-6-yl)methyl diphosphate-binding positions include T51, D84, N103, D167, K203, and 239–241; that span reads RVH.

Belongs to the DHPS family. The cofactor is Mg(2+).

The enzyme catalyses (7,8-dihydropterin-6-yl)methyl diphosphate + 4-aminobenzoate = 7,8-dihydropteroate + diphosphate. It participates in cofactor biosynthesis; tetrahydrofolate biosynthesis; 7,8-dihydrofolate from 2-amino-4-hydroxy-6-hydroxymethyl-7,8-dihydropteridine diphosphate and 4-aminobenzoate: step 1/2. In terms of biological role, catalyzes the condensation of para-aminobenzoate (pABA) with 6-hydroxymethyl-7,8-dihydropterin diphosphate (DHPt-PP) to form 7,8-dihydropteroate (H2Pte), the immediate precursor of folate derivatives. The chain is Dihydropteroate synthase (folP) from Staphylococcus haemolyticus.